The primary structure comprises 283 residues: Ribosomal RNA small subunit methyltransferase I (283 aa).

Belongs to the methyltransferase superfamily. RsmI family.

It localises to the cytoplasm. It catalyses the reaction cytidine(1402) in 16S rRNA + S-adenosyl-L-methionine = 2'-O-methylcytidine(1402) in 16S rRNA + S-adenosyl-L-homocysteine + H(+). Its function is as follows. Catalyzes the 2'-O-methylation of the ribose of cytidine 1402 (C1402) in 16S rRNA. The protein is Ribosomal RNA small subunit methyltransferase I of Haemophilus influenzae (strain ATCC 51907 / DSM 11121 / KW20 / Rd).